Consider the following 130-residue polypeptide: MENMYQYGTGRRKSSSARVFLKTGTGNITINNRKLNNYFSRRTARLIILQPIEFVNMSKKCDLYITVKGGGISGQVGAIRHGISRALIKYDSSFRNELRKLGFITRDSRQVERKKVGFRKARKRPQFSKR.

Belongs to the universal ribosomal protein uS9 family.

This chain is Small ribosomal subunit protein uS9, found in Buchnera aphidicola subsp. Baizongia pistaciae (strain Bp).